We begin with the raw amino-acid sequence, 319 residues long: Aspartate carbamoyltransferase catalytic subunit (319 aa).

Carbamoyl phosphate contacts are provided by Arg-65 and Thr-66. L-aspartate is bound at residue Lys-93. Residues Arg-115, His-149, and Gln-152 each coordinate carbamoyl phosphate. 2 residues coordinate L-aspartate: Arg-182 and Arg-237. Residues Gly-278 and Pro-279 each coordinate carbamoyl phosphate.

The protein belongs to the aspartate/ornithine carbamoyltransferase superfamily. ATCase family. As to quaternary structure, heterododecamer (2C3:3R2) of six catalytic PyrB chains organized as two trimers (C3), and six regulatory PyrI chains organized as three dimers (R2).

The enzyme catalyses carbamoyl phosphate + L-aspartate = N-carbamoyl-L-aspartate + phosphate + H(+). It functions in the pathway pyrimidine metabolism; UMP biosynthesis via de novo pathway; (S)-dihydroorotate from bicarbonate: step 2/3. Functionally, catalyzes the condensation of carbamoyl phosphate and aspartate to form carbamoyl aspartate and inorganic phosphate, the committed step in the de novo pyrimidine nucleotide biosynthesis pathway. In Azoarcus sp. (strain BH72), this protein is Aspartate carbamoyltransferase catalytic subunit.